The primary structure comprises 351 residues: Transcriptional activator POG1 (351 aa).

Positions 1–26 (MKQEPHRQSEEKEKPKGPMAVEREQH) are enriched in basic and acidic residues. The segment at 1–56 (MKQEPHRQSEEKEKPKGPMAVEREQHTSLSSGTTVTASTGDESTNSRPVESSQTEK) is disordered. Positions 27–56 (TSLSSGTTVTASTGDESTNSRPVESSQTEK) are enriched in polar residues. Phosphoserine occurs at positions 152 and 168. Disordered stretches follow at residues 234–256 (PGMG…TPVM) and 291–351 (QHQL…PPPT). The segment covering 241–256 (QLPTMSSNSESQTPVM) has biased composition (polar residues). Phosphoserine is present on S314.

The protein belongs to the POG1 family. Phosphorylated by CDC28.

It localises to the nucleus. Functionally, transcriptional activator which promotes cell cycle recovery with CLN2, after pheromone induced G1 arrest, probably inhibiting the ability of STE20 to activate the pheromone response pathway. Binds the promoters of genes that function in cell cycle regulation, cytoskeletal organization, and spindle assembly. May also be involved in stress-resistance. This is Transcriptional activator POG1 (POG1) from Saccharomyces cerevisiae (strain ATCC 204508 / S288c) (Baker's yeast).